A 134-amino-acid chain; its full sequence is MFCRSPLVAVILLVLATHIVLALGDATRIAASETVPSDSSQTTRKSTRRTTSVDNKRRLRQQIMGKDGPVVNDVHAEERGFLNNKLAYKMFGDGLDMQEKIIKSGGKGLKNVLRKRLYNKVSRAEHRQVPATRH.

An N-terminal signal peptide occupies residues methionine 1–alanine 22. Residues serine 32–arginine 60 form a disordered region. Over residues serine 37 to serine 52 the composition is skewed to low complexity. The short motif at arginine 57 to arginine 79 is the RxLR-dEER element.

It belongs to the RxLR effector family.

The protein resides in the secreted. It is found in the host nucleus. Effector that acts as a broad suppressor of cell death to interrupt plant immunity. Inhibits cell death induced by cell death-inducing proteins, including the PAMP elicitor INF1 from P.infestans. The polypeptide is Secreted RxLR effector protein 1 (Plasmopara viticola (Downy mildew of grapevine)).